We begin with the raw amino-acid sequence, 260 residues long: MVLITVLANLLILQLSYAQKSSELVIGGDECNINEHRFLVALYDVWSGDFLCGGTLINKEYVLTAAHCETRNMYIYLGMHNKNVQFDDEQRRYPKKKYFFRCSNNFTRWDKDIMLIRLNRPVRNSEHIAPLSLPSSPPSVGSVCRVMGWGTITSPNETLPDVPRCANINLLNYTVCRGVFPRLPARSRTLCAGVLQGGIDTCKRDSGGPLICNGQLQGVVFWGPKPCAQPRKPALYTKVFNHLDWIQSIIAGNTTVTCPP.

The N-terminal stretch at 1 to 18 is a signal peptide; it reads MVLITVLANLLILQLSYA. A propeptide spanning residues 19-24 is cleaved from the precursor; that stretch reads QKSSEL. In terms of domain architecture, Peptidase S1 spans 25–251; that stretch reads VIGGDECNIN…HLDWIQSIIA (227 aa). 6 disulfide bridges follow: C31–C165, C52–C68, C102–C258, C144–C212, C176–C191, and C202–C227. The active-site Charge relay system is the H67. N105 carries an N-linked (GlcNAc...) asparagine glycan. Residue D112 is the Charge relay system of the active site. N156 and N172 each carry an N-linked (GlcNAc...) asparagine glycan. The Charge relay system role is filled by S206. N253 carries N-linked (GlcNAc...) asparagine glycosylation.

Belongs to the peptidase S1 family. Snake venom subfamily. Monomer. In terms of tissue distribution, expressed by the venom gland.

It localises to the secreted. Functionally, thrombin-like snake venom serine protease. This Trimeresurus albolabris (White-lipped pit viper) protein is Thrombin-like enzyme 1.